A 171-amino-acid chain; its full sequence is MRAFLIGRWQPFHKGHLEIIKKISKEVDEIIIGIGSCQKSHTLTDPFTAGERMMMITKTLENYDINYYAIPINDIDYNAVWVSCVESLTPPFTTIYTGNSLVRELFSEKNYNVKKPELYNRTDYSGTKIRKKMLDGSNWEHLVPEEVVKVIEEIDGINRIRRLSEKDYDEE.

Belongs to the archaeal NMN adenylyltransferase family.

It localises to the cytoplasm. It carries out the reaction beta-nicotinamide D-ribonucleotide + ATP + H(+) = diphosphate + NAD(+). The protein operates within cofactor biosynthesis; NAD(+) biosynthesis; NAD(+) from nicotinamide D-ribonucleotide: step 1/1. The sequence is that of Nicotinamide-nucleotide adenylyltransferase from Methanococcus maripaludis (strain C6 / ATCC BAA-1332).